A 176-amino-acid polypeptide reads, in one-letter code: Transcriptional repressor MprA (176 aa).

In terms of domain architecture, HTH marR-type spans 26–160 (EILLTRLCMH…LEQITRKLLS (135 aa)).

Functionally, negative regulator of the multidrug operon emrAB. This is Transcriptional repressor MprA (mprA) from Escherichia coli O157:H7.